Reading from the N-terminus, the 242-residue chain is uncharacterized protein (242 aa).

A compositionally biased stretch (basic and acidic residues) spans 1–12 (MKLRRERFERRN). The tract at residues 1–21 (MKLRRERFERRNGSGKNSQSS) is disordered. Topologically, residues 1–23 (MKLRRERFERRNGSGKNSQSSSS) are cytoplasmic. The chain crosses the membrane as a helical span at residues 24–44 (WMVTFTDLITLILVFFILLFS). At 45 to 242 (MSQIDLQKFK…VIKKSKTTSS (198 aa)) the chain is on the extracellular side. The tract at residues 64-91 (GNGLQPDQTSIEKKNTSPSDTKKQEDQQ) is disordered. Residues 73–89 (SIEKKNTSPSDTKKQED) are compositionally biased toward basic and acidic residues. An OmpA-like domain is found at 117 to 238 (ERGVVLVLQE…RVEIVIKKSK (122 aa)).

This sequence belongs to the MotB family.

The protein resides in the cell membrane. May be involved in some transport function. This is an uncharacterized protein from Bacillus subtilis (strain 168).